A 785-amino-acid polypeptide reads, in one-letter code: AP-1 complex subunit gamma-like 2 (785 aa).

The segment at 369–379 (LSLALVNSSNV) is essential for ubiquitin-binding. Positions 592–617 (GPQADEEAKESKEAAQLSEAAPVPTE) are disordered. The 116-residue stretch at 665–780 (APIPDLKVFE…QEIFEVNNLP (116 aa)) folds into the GAE domain.

The protein belongs to the adaptor complexes large subunit family. May interact with AP1S1/Sigma1A-adaptin and AP1S2/Sigma1B-adaptin. Probably does not interact with APB1. Interacts (via GAE domain) with RABEP1, NECAP1, CLINT1 and AFTPH/aftiphilin. As to quaternary structure, (Microbial infection) Interacts with HBV major surface antigen L. Interacts with HBV core protein C in a ubiquitin-dependent manner. In terms of tissue distribution, expressed in all but one (skeletal muscle) tissues examined.

It is found in the golgi apparatus membrane. It localises to the cytoplasmic vesicle membrane. The protein resides in the endosome membrane. In terms of biological role, may function in protein sorting in late endosomes or multivesucular bodies (MVBs). (Microbial infection) Involved in MVB-assisted maturation of hepatitis B virus (HBV). This Homo sapiens (Human) protein is AP-1 complex subunit gamma-like 2 (AP1G2).